Here is a 138-residue protein sequence, read N- to C-terminus: ATP synthase epsilon chain (138 aa).

The protein belongs to the ATPase epsilon chain family. F-type ATPases have 2 components, CF(1) - the catalytic core - and CF(0) - the membrane proton channel. CF(1) has five subunits: alpha(3), beta(3), gamma(1), delta(1), epsilon(1). CF(0) has three main subunits: a, b and c.

The protein resides in the cellular thylakoid membrane. Produces ATP from ADP in the presence of a proton gradient across the membrane. This chain is ATP synthase epsilon chain, found in Cyanothece sp. (strain PCC 7425 / ATCC 29141).